A 425-amino-acid chain; its full sequence is Enolase (425 aa).

Q162 serves as a coordination point for (2R)-2-phosphoglycerate. The active-site Proton donor is the E204. Positions 241, 282, and 309 each coordinate Mg(2+). Residues K334, R363, S364, and K385 each coordinate (2R)-2-phosphoglycerate. K334 (proton acceptor) is an active-site residue.

This sequence belongs to the enolase family. Requires Mg(2+) as cofactor.

It is found in the cytoplasm. The protein resides in the secreted. The protein localises to the cell surface. The catalysed reaction is (2R)-2-phosphoglycerate = phosphoenolpyruvate + H2O. It participates in carbohydrate degradation; glycolysis; pyruvate from D-glyceraldehyde 3-phosphate: step 4/5. In terms of biological role, catalyzes the reversible conversion of 2-phosphoglycerate (2-PG) into phosphoenolpyruvate (PEP). It is essential for the degradation of carbohydrates via glycolysis. The chain is Enolase from Corynebacterium efficiens (strain DSM 44549 / YS-314 / AJ 12310 / JCM 11189 / NBRC 100395).